Here is a 702-residue protein sequence, read N- to C-terminus: Glucosidase 2 subunit beta (702 aa).

The signal sequence occupies residues 1 to 20 (MVSMFSLFLLLIEQSPLVAS). The N-linked (GlcNAc...) asparagine glycan is linked to N145. The stretch at 163–228 (SYREGKEALE…LRGEYFNQLS (66 aa)) forms a coiled coil. N-linked (GlcNAc...) asparagine glycosylation is found at N240 and N358. Positions 435–457 (PKVLPPDAVESEQDTNSDHIGTS) are disordered. A coiled-coil region spans residues 478-517 (KDLVSLEKRFRSCESQVSLLENELKQKMDYKKLLDETEDE). N520 and N525 each carry an N-linked (GlcNAc...) asparagine glycan. An MRH domain is found at 537-689 (SYCLDDILDN…DVVGPLGCNK (153 aa)). 3 cysteine pairs are disulfide-bonded: C539–C552, C646–C675, and C660–C687. N-linked (GlcNAc...) asparagine glycans are attached at residues N688 and N699.

In terms of assembly, heterodimer of a catalytic subunit alpha (ROT2) and a subunit beta (GTB1).

It localises to the endoplasmic reticulum. Its function is as follows. Subunit of glucosidase 2, which cleaves sequentially the 2 innermost alpha-1,3-linked glucose residues from the Glc(2)Man(9)GlcNAc(2) oligosaccharide precursor of immature glycoproteins. Specifically required for the cleavage of the final glucose. The sequence is that of Glucosidase 2 subunit beta (GTB1) from Saccharomyces cerevisiae (strain ATCC 204508 / S288c) (Baker's yeast).